A 381-amino-acid chain; its full sequence is Putative glutamate--cysteine ligase 2 (381 aa).

Belongs to the glutamate--cysteine ligase type 2 family. YbdK subfamily.

It carries out the reaction L-cysteine + L-glutamate + ATP = gamma-L-glutamyl-L-cysteine + ADP + phosphate + H(+). Functionally, ATP-dependent carboxylate-amine ligase which exhibits weak glutamate--cysteine ligase activity. This chain is Putative glutamate--cysteine ligase 2, found in Polaromonas naphthalenivorans (strain CJ2).